Consider the following 320-residue polypeptide: ATP-dependent 6-phosphofructokinase (320 aa).

ATP is bound at residue G12. Position 22 to 26 (22 to 26) interacts with ADP; sequence RGVVR. Residues 73–74 and 103–106 contribute to the ATP site; these read RF and GDGS. Residue D104 coordinates Mg(2+). Residue 126-128 coordinates substrate; sequence TID. The active-site Proton acceptor is the D128. R155 lines the ADP pocket. Residues R163 and 170–172 each bind substrate; that span reads MGR. ADP is bound by residues 186 to 188, K212, and 214 to 216; these read GCE and KKH. Residues E223, R244, and 250–253 each bind substrate; that span reads HIQR.

This sequence belongs to the phosphofructokinase type A (PFKA) family. ATP-dependent PFK group I subfamily. Prokaryotic clade 'B1' sub-subfamily. As to quaternary structure, homotetramer. The cofactor is Mg(2+).

It localises to the cytoplasm. The enzyme catalyses beta-D-fructose 6-phosphate + ATP = beta-D-fructose 1,6-bisphosphate + ADP + H(+). It functions in the pathway carbohydrate degradation; glycolysis; D-glyceraldehyde 3-phosphate and glycerone phosphate from D-glucose: step 3/4. Allosterically activated by ADP and other diphosphonucleosides, and allosterically inhibited by phosphoenolpyruvate. Functionally, catalyzes the phosphorylation of D-fructose 6-phosphate to fructose 1,6-bisphosphate by ATP, the first committing step of glycolysis. This is ATP-dependent 6-phosphofructokinase from Edwardsiella ictaluri (strain 93-146).